Consider the following 220-residue polypeptide: Large ribosomal subunit protein eL15 (220 aa).

The span at Lys197–Arg207 shows a compositional bias: basic and acidic residues. Residues Lys197–Lys220 form a disordered region.

This sequence belongs to the eukaryotic ribosomal protein eL15 family.

This Desulfurococcus amylolyticus (strain DSM 18924 / JCM 16383 / VKM B-2413 / 1221n) (Desulfurococcus kamchatkensis) protein is Large ribosomal subunit protein eL15.